Here is a 119-residue protein sequence, read N- to C-terminus: MRIALIAHDKKKQEIIEFAKRNKEALEKYELLATGTTGKMISEETGLNIKRYLSGPYGGDQQIGGRIAEGTIGLVVFFRDPLTAQPHEPDVSALLRVCDVHNIPVVTNSGTADLIIKQF.

The 119-residue stretch at 1–119 (MRIALIAHDK…GTADLIIKQF (119 aa)) folds into the MGS-like domain. Substrate-binding positions include H8, K12, 34 to 37 (TGTT), and 54 to 55 (SG). D60 acts as the Proton donor/acceptor in catalysis. H87 provides a ligand contact to substrate.

The protein belongs to the methylglyoxal synthase family.

The catalysed reaction is dihydroxyacetone phosphate = methylglyoxal + phosphate. Functionally, catalyzes the formation of methylglyoxal from dihydroxyacetone phosphate. The protein is Methylglyoxal synthase of Clostridium botulinum (strain Eklund 17B / Type B).